We begin with the raw amino-acid sequence, 478 residues long: Protein nucleotidyltransferase YdiU (478 aa).

ATP-binding residues include Gly84, Gly86, Arg87, Lys107, Asp119, Gly120, Arg170, and Arg177. Asp246 acts as the Proton acceptor in catalysis. Mg(2+) is bound by residues Asn247 and Asp256. Asp256 provides a ligand contact to ATP.

It belongs to the SELO family. Requires Mg(2+) as cofactor. It depends on Mn(2+) as a cofactor.

The enzyme catalyses L-seryl-[protein] + ATP = 3-O-(5'-adenylyl)-L-seryl-[protein] + diphosphate. The catalysed reaction is L-threonyl-[protein] + ATP = 3-O-(5'-adenylyl)-L-threonyl-[protein] + diphosphate. It catalyses the reaction L-tyrosyl-[protein] + ATP = O-(5'-adenylyl)-L-tyrosyl-[protein] + diphosphate. It carries out the reaction L-histidyl-[protein] + UTP = N(tele)-(5'-uridylyl)-L-histidyl-[protein] + diphosphate. The enzyme catalyses L-seryl-[protein] + UTP = O-(5'-uridylyl)-L-seryl-[protein] + diphosphate. The catalysed reaction is L-tyrosyl-[protein] + UTP = O-(5'-uridylyl)-L-tyrosyl-[protein] + diphosphate. In terms of biological role, nucleotidyltransferase involved in the post-translational modification of proteins. It can catalyze the addition of adenosine monophosphate (AMP) or uridine monophosphate (UMP) to a protein, resulting in modifications known as AMPylation and UMPylation. This chain is Protein nucleotidyltransferase YdiU, found in Escherichia coli O139:H28 (strain E24377A / ETEC).